The primary structure comprises 441 residues: Glutamate--tRNA ligase 1 (441 aa).

The short motif at 7–17 (PSPTGYMHIGN) is the 'HIGH' region element. Positions 236–240 (KMSKR) match the 'KMSKS' region motif. Lys-239 is an ATP binding site.

Belongs to the class-I aminoacyl-tRNA synthetase family. Glutamate--tRNA ligase type 1 subfamily. As to quaternary structure, monomer.

The protein resides in the cytoplasm. The catalysed reaction is tRNA(Glu) + L-glutamate + ATP = L-glutamyl-tRNA(Glu) + AMP + diphosphate. Its function is as follows. Catalyzes the attachment of glutamate to tRNA(Glu) in a two-step reaction: glutamate is first activated by ATP to form Glu-AMP and then transferred to the acceptor end of tRNA(Glu). The sequence is that of Glutamate--tRNA ligase 1 from Anaplasma marginale (strain St. Maries).